Reading from the N-terminus, the 235-residue chain is Class B acid phosphatase (235 aa).

A signal peptide spans M1–A22. D67 acts as the Nucleophile in catalysis. Positions 67 and 69 each coordinate Mg(2+). The active-site Proton donor is the D69. Residues T135–G136 and K175 contribute to the substrate site. D190 lines the Mg(2+) pocket.

The protein belongs to the class B bacterial acid phosphatase family. In terms of assembly, homotetramer. Mg(2+) serves as cofactor.

It localises to the periplasm. It catalyses the reaction a phosphate monoester + H2O = an alcohol + phosphate. Its function is as follows. Dephosphorylates several organic phosphate monoesters. Also has a phosphotransferase activity catalyzing the transfer of low-energy phosphate groups from organic phosphate monoesters to free hydroxyl groups of various organic compounds. This chain is Class B acid phosphatase, found in Aggregatibacter actinomycetemcomitans serotype C (strain D11S-1) (Actinobacillus actinomycetemcomitans).